We begin with the raw amino-acid sequence, 431 residues long: Glutamate-1-semialdehyde 2,1-aminomutase (431 aa).

An N6-(pyridoxal phosphate)lysine modification is found at Lys265.

Belongs to the class-III pyridoxal-phosphate-dependent aminotransferase family. HemL subfamily. As to quaternary structure, homodimer. Requires pyridoxal 5'-phosphate as cofactor.

The protein resides in the cytoplasm. The enzyme catalyses (S)-4-amino-5-oxopentanoate = 5-aminolevulinate. It participates in porphyrin-containing compound metabolism; protoporphyrin-IX biosynthesis; 5-aminolevulinate from L-glutamyl-tRNA(Glu): step 2/2. The sequence is that of Glutamate-1-semialdehyde 2,1-aminomutase from Vibrio campbellii (strain ATCC BAA-1116).